Here is a 312-residue protein sequence, read N- to C-terminus: Olfactory receptor 6X1 (312 aa).

Over 1-23 the chain is Extracellular; sequence MRNGTVITEFILLGFPVIQGLQT. N3 carries N-linked (GlcNAc...) asparagine glycosylation. The helical transmembrane segment at 24-44 threads the bilayer; that stretch reads PLFIAIFLTYILTLAGNGLII. The Cytoplasmic segment spans residues 45–52; that stretch reads ATVWAEPR. A helical transmembrane segment spans residues 53-73; sequence LQIPMYFFLCNLSFLEIWYTT. Residues 74-97 are Extracellular-facing; sequence TVIPKLLGTFVVARTVICMSCCLL. A disulfide bond links C95 and C187. The helical transmembrane segment at 98-118 threads the bilayer; that stretch reads QAFFHFFVGTTEFLILTIMSF. Over 119–137 the chain is Cytoplasmic; the sequence is DRYLTICNPLHHPTIMTSK. A helical membrane pass occupies residues 138-158; it reads LCLQLALSSWVVGFTIVFCQT. The Extracellular segment spans residues 159–195; the sequence is MLLIQLPFCGNNVISHFYCDVGPSLKAACIDTSILEL. The helical transmembrane segment at 196-215 threads the bilayer; it reads LGVIATILVIPGSLLFNMIS. The Cytoplasmic portion of the chain corresponds to 216–235; the sequence is YIYILSAILRIPSATGHQKT. A helical membrane pass occupies residues 236 to 256; that stretch reads FSTCASHLTVVSLLYGAVLFM. Over 257-269 the chain is Extracellular; sequence YLRPTAHSSFKIN. The helical transmembrane segment at 270–290 threads the bilayer; the sequence is KVVSVLNTILTPLLNPFIYTI. Residues 291-312 lie on the Cytoplasmic side of the membrane; the sequence is RNKEVKGALRKAMTCPKTGHAK.

The protein belongs to the G-protein coupled receptor 1 family.

It localises to the cell membrane. Functionally, odorant receptor. The polypeptide is Olfactory receptor 6X1 (OR6X1) (Homo sapiens (Human)).